The primary structure comprises 137 residues: Large ribosomal subunit protein uL16 (137 aa).

The protein belongs to the universal ribosomal protein uL16 family. Part of the 50S ribosomal subunit.

Functionally, binds 23S rRNA and is also seen to make contacts with the A and possibly P site tRNAs. In Streptococcus thermophilus (strain CNRZ 1066), this protein is Large ribosomal subunit protein uL16.